The primary structure comprises 420 residues: Annetocin receptor (420 aa).

Residues 1-54 (MEMDDDEAILLDDIYALASTPNQTIVTSSFPQTVSPGFLARRNEALAMVEVAVQ) lie on the Extracellular side of the membrane. Asn22 carries N-linked (GlcNAc...) asparagine glycosylation. Residues 55–75 (STILILTVVGNAAVLAMIVSL) form a helical membrane-spanning segment. The Cytoplasmic segment spans residues 76–83 (SRHKDLGR). A helical transmembrane segment spans residues 84–104 (MYTMIGHLSCADLFVAIFNLL). Over 105-124 (PQLLWDVTHRFRGGRVLCKL) the chain is Extracellular. Cys122 and Cys201 are disulfide-bonded. Residues 125-145 (VKYVQVVAMYASAYVLMSTAV) form a helical membrane-spanning segment. The Cytoplasmic portion of the chain corresponds to 146 to 166 (DRYTAICHPMRSHTWTSTTAH). A helical membrane pass occupies residues 167 to 187 (YLVIGAWVLALVFAVPQLVIF). Over 188–212 (DYVEVVPGSGVYDCVDHFRPRWTLP) the chain is Extracellular. Residues 213–233 (VYITWFALAVYVIPLVVLATI) traverse the membrane as a helical segment. Topologically, residues 234 to 328 (YLRICVVVWK…KTKTVKLTLT (95 aa)) are cytoplasmic. A helical transmembrane segment spans residues 329-349 (VVISYLVCWAPFFVSHIWSAW). Topologically, residues 350 to 360 (DPHAPFEGTEM) are extracellular. The chain crosses the membrane as a helical span at residues 361–381 (VITLLLGSLNSCINPWIYLAF). The Cytoplasmic portion of the chain corresponds to 382-420 (SDQLRRKVTQCCPRSWGQRPSTLSHDSTDFRSGSRPTHS). The tract at residues 397-420 (WGQRPSTLSHDSTDFRSGSRPTHS) is disordered. The segment covering 399–420 (QRPSTLSHDSTDFRSGSRPTHS) has biased composition (polar residues).

It belongs to the G-protein coupled receptor 1 family. Vasopressin/oxytocin receptor subfamily. In terms of tissue distribution, nephridia in clitellum region.

The protein resides in the cell membrane. Its function is as follows. Receptor for annetocin. Activation by annetocin may induce egg-laying behavior through calcium-dependent signaling. The chain is Annetocin receptor from Eisenia fetida (Red wiggler worm).